Reading from the N-terminus, the 282-residue chain is Elongation factor Ts (282 aa).

Residues 80 to 83 (TDFV) are involved in Mg(2+) ion dislocation from EF-Tu.

This sequence belongs to the EF-Ts family.

It is found in the cytoplasm. Its function is as follows. Associates with the EF-Tu.GDP complex and induces the exchange of GDP to GTP. It remains bound to the aminoacyl-tRNA.EF-Tu.GTP complex up to the GTP hydrolysis stage on the ribosome. This Chlamydia felis (strain Fe/C-56) (Chlamydophila felis) protein is Elongation factor Ts.